The chain runs to 757 residues: 5-methyltetrahydropteroyltriglutamate--homocysteine methyltransferase (757 aa).

Residues 15-18 (RELK) and Lys114 each bind 5-methyltetrahydropteroyltri-L-glutamate. Residues 428 to 430 (IGS) and Glu481 contribute to the L-homocysteine site. Residues 428-430 (IGS) and Glu481 each bind L-methionine. Residues 512–513 (RC) and Trp558 contribute to the 5-methyltetrahydropteroyltri-L-glutamate site. Position 596 (Asp596) interacts with L-homocysteine. Position 596 (Asp596) interacts with L-methionine. Glu602 provides a ligand contact to 5-methyltetrahydropteroyltri-L-glutamate. Positions 639, 641, and 663 each coordinate Zn(2+). His692 (proton donor) is an active-site residue. Cys724 contacts Zn(2+).

Belongs to the vitamin-B12 independent methionine synthase family. It depends on Zn(2+) as a cofactor.

The enzyme catalyses 5-methyltetrahydropteroyltri-L-glutamate + L-homocysteine = tetrahydropteroyltri-L-glutamate + L-methionine. It participates in amino-acid biosynthesis; L-methionine biosynthesis via de novo pathway; L-methionine from L-homocysteine (MetE route): step 1/1. In terms of biological role, catalyzes the transfer of a methyl group from 5-methyltetrahydrofolate to homocysteine resulting in methionine formation. This is 5-methyltetrahydropteroyltriglutamate--homocysteine methyltransferase from Lactococcus lactis subsp. cremoris (strain MG1363).